Consider the following 263-residue polypeptide: Proline rich transmembrane protein 1B (263 aa).

Over residues 1–17 the composition is skewed to gly residues; it reads MEAGAGGAGSDTKGGGS. The disordered stretch occupies residues 1-107; the sequence is MEAGAGGAGS…IGFVGEPPPY (107 aa). Low complexity-rich tracts occupy residues 37–47 and 75–86; these read QMPAQPALPQL and DAPAQAAGEAGP. Transmembrane regions (helical) follow at residues 190–210 and 238–258; these read MMESVLVTLFCCLLTGLIAIV and VLFSLLFGVFVSTSWVIYVVV.

The protein belongs to the CD225/Dispanin family.

The protein resides in the membrane. This chain is Proline rich transmembrane protein 1B, found in Homo sapiens (Human).